Consider the following 1087-residue polypeptide: Error-prone DNA polymerase 2 (1087 aa).

Positions 1033–1064 (DGAFRPPTGRGDEFAHGSPGSADSRGKAPPGV) are disordered.

Belongs to the DNA polymerase type-C family. DnaE2 subfamily.

It localises to the cytoplasm. It catalyses the reaction DNA(n) + a 2'-deoxyribonucleoside 5'-triphosphate = DNA(n+1) + diphosphate. Functionally, DNA polymerase involved in damage-induced mutagenesis and translesion synthesis (TLS). It is not the major replicative DNA polymerase. The protein is Error-prone DNA polymerase 2 of Rhizobium meliloti (strain 1021) (Ensifer meliloti).